The chain runs to 341 residues: tRNA N6-adenosine threonylcarbamoyltransferase (341 aa).

Fe cation contacts are provided by H115 and H119. Residues 137–141 (IVSGG), D170, G183, D187, and N276 contribute to the substrate site. D304 lines the Fe cation pocket.

This sequence belongs to the KAE1 / TsaD family. The cofactor is Fe(2+).

It is found in the cytoplasm. It catalyses the reaction L-threonylcarbamoyladenylate + adenosine(37) in tRNA = N(6)-L-threonylcarbamoyladenosine(37) in tRNA + AMP + H(+). Its function is as follows. Required for the formation of a threonylcarbamoyl group on adenosine at position 37 (t(6)A37) in tRNAs that read codons beginning with adenine. Is involved in the transfer of the threonylcarbamoyl moiety of threonylcarbamoyl-AMP (TC-AMP) to the N6 group of A37, together with TsaE and TsaB. TsaD likely plays a direct catalytic role in this reaction. This Staphylococcus aureus (strain bovine RF122 / ET3-1) protein is tRNA N6-adenosine threonylcarbamoyltransferase.